The sequence spans 65 residues: uncharacterized protein (65 aa).

Residues 37 to 57 traverse the membrane as a helical segment; sequence ILAIMTSVLPVLLIYIIWIFI.

Its subcellular location is the cell membrane. This is an uncharacterized protein from Bacillus subtilis (strain 168).